The chain runs to 122 residues: MIQTESRLDVADNTGAKSVLCIKVLGGSKRRYASVGDIIKVSVKEAAPRGRVKKGEVYSAVVVRTAKGIRRGDGSLVKFDGNAAVLLNSKLEPIGTRIFGPVTRELRTERFMKIVSLAPEVL.

This sequence belongs to the universal ribosomal protein uL14 family. In terms of assembly, part of the 50S ribosomal subunit. Forms a cluster with proteins L3 and L19. In the 70S ribosome, L14 and L19 interact and together make contacts with the 16S rRNA in bridges B5 and B8.

In terms of biological role, binds to 23S rRNA. Forms part of two intersubunit bridges in the 70S ribosome. The sequence is that of Large ribosomal subunit protein uL14 from Acidovorax sp. (strain JS42).